The sequence spans 66 residues: Beta-defensin 134 (66 aa).

A signal peptide spans 1 to 19; sequence MKPLLVVFVFLFLWDPVLA. 3 cysteine pairs are disulfide-bonded: cysteine 32/cysteine 58, cysteine 38/cysteine 52, and cysteine 42/cysteine 59.

This sequence belongs to the beta-defensin family.

Its subcellular location is the secreted. Has antibacterial activity. In Homo sapiens (Human), this protein is Beta-defensin 134 (DEFB134).